The following is a 975-amino-acid chain: Translation initiation factor IF-2 (975 aa).

Basic and acidic residues predominate over residues 48-63 (DHLRKSHGATDGDKRK). 2 disordered regions span residues 48–84 (DHLR…GKAR) and 96–388 (FVKR…QAPT). The span at 104–115 (ETGADQAQAQTD) shows a compositional bias: low complexity. Residues 120–177 (AELKRREEEARREAELLEKQAQELRERQERLEREEAERRAREEAAEAERRRAEEEAAA) show a composition bias toward basic and acidic residues. Residues 178-211 (KRAAAAQAEAAQQAAAAREQAQRAQSEPAEQSAQ) show a composition bias toward low complexity. Residues 212–263 (DEARAAAERAAQREAAKKAEDAAREAADKARAEQEEIRKRREAAEAEARAIR) are compositionally biased toward basic and acidic residues. A compositionally biased stretch (low complexity) spans 302-330 (KPAGEAAAARPAAKKPASGAPAPAAAPAG). The span at 359 to 372 (SSGGVDRGWRGGPK) shows a compositional bias: gly residues. The tr-type G domain maps to 475–644 (PRPPVVTVMG…LLQAEVLELK (170 aa)). The G1 stretch occupies residues 484–491 (GHVDHGKT). 484–491 (GHVDHGKT) serves as a coordination point for GTP. Residues 509–513 (GITQH) are G2. Positions 530-533 (DTPG) are G3. GTP contacts are provided by residues 530–534 (DTPGH) and 584–587 (NKID). Residues 584–587 (NKID) form a G4 region. The interval 620–622 (SAK) is G5.

Belongs to the TRAFAC class translation factor GTPase superfamily. Classic translation factor GTPase family. IF-2 subfamily.

It is found in the cytoplasm. Its function is as follows. One of the essential components for the initiation of protein synthesis. Protects formylmethionyl-tRNA from spontaneous hydrolysis and promotes its binding to the 30S ribosomal subunits. Also involved in the hydrolysis of GTP during the formation of the 70S ribosomal complex. The polypeptide is Translation initiation factor IF-2 (Burkholderia pseudomallei (strain 1710b)).